Consider the following 1607-residue polypeptide: Abnormal cell migration protein 38 (1607 aa).

Disordered stretches follow at residues 14-52 (EFNK…SQDF), 67-93 (RLSP…QYHV), 167-222 (STSY…AAQA), 326-425 (GSSA…PPSQ), 459-478 (SPNT…GMDQ), 549-594 (MVHR…QHSY), 845-931 (YDEN…PETE), 1017-1061 (SVQV…DYDM), 1141-1241 (EPSP…VTPK), 1319-1378 (ETPN…KGQL), 1392-1445 (FANV…PQAV), and 1517-1607 (KVKT…STDP). Polar residues-rich tracts occupy residues 81–93 (PGPS…QYHV) and 179–191 (PSGN…NHQQ). Over residues 195 to 205 (VPQVQQQPAKP) the composition is skewed to low complexity. Positions 206 to 218 (KTTKKRPPPKKKT) are enriched in basic residues. Residues 327-341 (SSASSSAQPSQPAKK) show a composition bias toward low complexity. Composition is skewed to polar residues over residues 349–371 (VPNT…QITP) and 379–425 (PTTT…PPSQ). Residues 585–594 (NSHSQSQHSY) are compositionally biased toward low complexity. The span at 858-871 (EEPESESESEPEAE) shows a compositional bias: acidic residues. 2 stretches are compositionally biased toward basic and acidic residues: residues 872–886 (PEPK…EPAR) and 907–917 (YRNESESTFDW). Composition is skewed to low complexity over residues 1333–1354 (PNIP…SVSV), 1395–1419 (VPSS…VSAK), and 1584–1601 (LLGT…SSGL).

In terms of tissue distribution, expressed in gonad distal tip cells and gonad sheath cells.

It is found in the nucleus. The protein localises to the cytoplasm. Functionally, during gonad development, involved in distal tip cell (DTC) migration from the dorsal side of the hermaphrodite body to the midbody which allows for the formation of gonad arms. Role in gonad DTC migration may be in association with integrin related proteins ina-1 and mig-15. This chain is Abnormal cell migration protein 38, found in Caenorhabditis elegans.